Reading from the N-terminus, the 225-residue chain is Elongation factor 1-beta (225 aa).

Positions 2 to 84 (GFGDLKSPAG…ALGTYGPADV (83 aa)) constitute a GST C-terminal domain. An N6-acetyllysine modification is found at lysine 7. A phosphoserine mark is found at serine 8 and serine 42. The interval 80–114 (GPADVEDTTGSGATDSKDDDDIDLFGSDDEEESEE) is disordered. 2 positions are modified to phosphothreonine: threonine 88 and threonine 93. Serine 95 is modified (phosphoserine). Acidic residues predominate over residues 96–113 (KDDDDIDLFGSDDEEESE). Serine 106 is subject to Phosphoserine; by CK2. Lysine 147 is covalently cross-linked (Glycyl lysine isopeptide (Lys-Gly) (interchain with G-Cter in SUMO2)). Serine 174 is subject to Phosphoserine.

Belongs to the EF-1-beta/EF-1-delta family. EF-1 is composed of 4 subunits: alpha, beta (alpha subunit of the eEF1B subcomplex), delta (beta subunit of the eEF1B subcomplex), and gamma (gamma subunit of the eEF1B subcomplex). Interacts with elongation factor EEF1A1. In terms of processing, phosphorylation affects the GDP/GTP exchange rate.

In terms of biological role, catalytic subunit of the guanine nucleotide exchange factor (GEF) (eEF1B subcomplex) of the eukaryotic elongation factor 1 complex (eEF1). Stimulates the exchange of GDP for GTP on elongation factor 1A (eEF1A), probably by displacing GDP from the nucleotide binding pocket in eEF1A. The protein is Elongation factor 1-beta (EEF1B) of Oryctolagus cuniculus (Rabbit).